Reading from the N-terminus, the 159-residue chain is Phosphopantetheine adenylyltransferase (159 aa).

Position 10 (threonine 10) interacts with substrate. Residues 10–11 (TF) and histidine 18 each bind ATP. Substrate is bound by residues lysine 42, methionine 74, and arginine 88. ATP-binding positions include 89 to 91 (GLR), glutamate 99, and 124 to 130 (WSFISSS).

This sequence belongs to the bacterial CoaD family. As to quaternary structure, homohexamer. Requires Mg(2+) as cofactor.

The protein localises to the cytoplasm. The catalysed reaction is (R)-4'-phosphopantetheine + ATP + H(+) = 3'-dephospho-CoA + diphosphate. The protein operates within cofactor biosynthesis; coenzyme A biosynthesis; CoA from (R)-pantothenate: step 4/5. Reversibly transfers an adenylyl group from ATP to 4'-phosphopantetheine, yielding dephospho-CoA (dPCoA) and pyrophosphate. This is Phosphopantetheine adenylyltransferase from Klebsiella pneumoniae subsp. pneumoniae (strain ATCC 700721 / MGH 78578).